The primary structure comprises 299 residues: Acetaldehyde dehydrogenase (299 aa).

An NAD(+)-binding site is contributed by 11 to 14 (SGNI). Cys-126 serves as the catalytic Acyl-thioester intermediate. Residues 157–165 (SAGPGTRAN) and Asn-267 each bind NAD(+).

Belongs to the acetaldehyde dehydrogenase family.

It carries out the reaction acetaldehyde + NAD(+) + CoA = acetyl-CoA + NADH + H(+). In Bacillus thuringiensis (strain Al Hakam), this protein is Acetaldehyde dehydrogenase.